The sequence spans 713 residues: Phosphoribosylformylglycinamidine synthase subunit PurL (713 aa).

Residue His32 is part of the active site. Tyr35 lines the ATP pocket. Glu76 is a binding site for Mg(2+). Residues 77-80 (SHNH) and Arg99 contribute to the substrate site. His78 serves as the catalytic Proton acceptor. Residue Asp100 participates in Mg(2+) binding. Residue Gln224 coordinates substrate. Asp252 is a binding site for Mg(2+). Substrate is bound at residue 296–298 (ESQ). The ATP site is built by Asp471 and Gly508. Mg(2+) is bound at residue Asn509. Position 511 (Ser511) interacts with substrate.

The protein belongs to the FGAMS family. As to quaternary structure, monomer. Part of the FGAM synthase complex composed of 1 PurL, 1 PurQ and 2 PurS subunits.

It is found in the cytoplasm. The catalysed reaction is N(2)-formyl-N(1)-(5-phospho-beta-D-ribosyl)glycinamide + L-glutamine + ATP + H2O = 2-formamido-N(1)-(5-O-phospho-beta-D-ribosyl)acetamidine + L-glutamate + ADP + phosphate + H(+). Its pathway is purine metabolism; IMP biosynthesis via de novo pathway; 5-amino-1-(5-phospho-D-ribosyl)imidazole from N(2)-formyl-N(1)-(5-phospho-D-ribosyl)glycinamide: step 1/2. Its function is as follows. Part of the phosphoribosylformylglycinamidine synthase complex involved in the purines biosynthetic pathway. Catalyzes the ATP-dependent conversion of formylglycinamide ribonucleotide (FGAR) and glutamine to yield formylglycinamidine ribonucleotide (FGAM) and glutamate. The FGAM synthase complex is composed of three subunits. PurQ produces an ammonia molecule by converting glutamine to glutamate. PurL transfers the ammonia molecule to FGAR to form FGAM in an ATP-dependent manner. PurS interacts with PurQ and PurL and is thought to assist in the transfer of the ammonia molecule from PurQ to PurL. This is Phosphoribosylformylglycinamidine synthase subunit PurL from Thermococcus kodakarensis (strain ATCC BAA-918 / JCM 12380 / KOD1) (Pyrococcus kodakaraensis (strain KOD1)).